Here is a 1402-residue protein sequence, read N- to C-terminus: DNA-directed RNA polymerase subunit beta' (1402 aa).

The Zn(2+) site is built by Cys-70, Cys-72, Cys-85, and Cys-88. Mg(2+) is bound by residues Asp-460, Asp-462, and Asp-464. Zn(2+)-binding residues include Cys-812, Cys-886, Cys-893, and Cys-896. Residues Asp-1373–Asp-1402 are disordered.

It belongs to the RNA polymerase beta' chain family. In terms of assembly, the RNAP catalytic core consists of 2 alpha, 1 beta, 1 beta' and 1 omega subunit. When a sigma factor is associated with the core the holoenzyme is formed, which can initiate transcription. It depends on Mg(2+) as a cofactor. Requires Zn(2+) as cofactor.

The catalysed reaction is RNA(n) + a ribonucleoside 5'-triphosphate = RNA(n+1) + diphosphate. DNA-dependent RNA polymerase catalyzes the transcription of DNA into RNA using the four ribonucleoside triphosphates as substrates. The chain is DNA-directed RNA polymerase subunit beta' from Dichelobacter nodosus (strain VCS1703A).